The chain runs to 329 residues: Holliday junction branch migration complex subunit RuvB (329 aa).

The segment at 1-20 (MSRILEGDPVEGEKSWENEL) is disordered. The segment at 1 to 181 (MSRILEGDPV…FGIVERLQFY (181 aa)) is large ATPase domain (RuvB-L). Residues 11-20 (EGEKSWENEL) show a composition bias toward basic and acidic residues. ATP is bound by residues Leu20, Arg21, Gly62, Lys65, Thr66, Thr67, 128-130 (EDY), Arg171, Tyr181, and Arg218. Thr66 provides a ligand contact to Mg(2+). The segment at 182–252 (DKDALRQILM…IAVYALNQLG (71 aa)) is small ATPAse domain (RuvB-S). The segment at 255-329 (QYGLDLMDRR…FAKSSVLADK (75 aa)) is head domain (RuvB-H). 3 residues coordinate DNA: Arg291, Lys310, and Arg315.

This sequence belongs to the RuvB family. As to quaternary structure, homohexamer. Forms an RuvA(8)-RuvB(12)-Holliday junction (HJ) complex. HJ DNA is sandwiched between 2 RuvA tetramers; dsDNA enters through RuvA and exits via RuvB. An RuvB hexamer assembles on each DNA strand where it exits the tetramer. Each RuvB hexamer is contacted by two RuvA subunits (via domain III) on 2 adjacent RuvB subunits; this complex drives branch migration. In the full resolvosome a probable DNA-RuvA(4)-RuvB(12)-RuvC(2) complex forms which resolves the HJ.

It localises to the cytoplasm. It catalyses the reaction ATP + H2O = ADP + phosphate + H(+). In terms of biological role, the RuvA-RuvB-RuvC complex processes Holliday junction (HJ) DNA during genetic recombination and DNA repair, while the RuvA-RuvB complex plays an important role in the rescue of blocked DNA replication forks via replication fork reversal (RFR). RuvA specifically binds to HJ cruciform DNA, conferring on it an open structure. The RuvB hexamer acts as an ATP-dependent pump, pulling dsDNA into and through the RuvAB complex. RuvB forms 2 homohexamers on either side of HJ DNA bound by 1 or 2 RuvA tetramers; 4 subunits per hexamer contact DNA at a time. Coordinated motions by a converter formed by DNA-disengaged RuvB subunits stimulates ATP hydrolysis and nucleotide exchange. Immobilization of the converter enables RuvB to convert the ATP-contained energy into a lever motion, pulling 2 nucleotides of DNA out of the RuvA tetramer per ATP hydrolyzed, thus driving DNA branch migration. The RuvB motors rotate together with the DNA substrate, which together with the progressing nucleotide cycle form the mechanistic basis for DNA recombination by continuous HJ branch migration. Branch migration allows RuvC to scan DNA until it finds its consensus sequence, where it cleaves and resolves cruciform DNA. The protein is Holliday junction branch migration complex subunit RuvB of Bdellovibrio bacteriovorus (strain ATCC 15356 / DSM 50701 / NCIMB 9529 / HD100).